The sequence spans 526 residues: Protein DETOXIFICATION 43 (526 aa).

Topologically, residues 1–36 (MTETGDDLATVKKPIPFLVIFKDLRHVFSRDTTGRE) are cytoplasmic. Residues 37–57 (ILGIAFPAALALAADPIASLI) form a helical membrane-spanning segment. Over 58–59 (DT) the chain is Extracellular. The chain crosses the membrane as a helical span at residues 60–80 (AFVGRLGAVQLAAVGVSIAIF). Residues 81–170 (NQASRITIFP…NKKEKRTIRT (90 aa)) lie on the Cytoplasmic side of the membrane. The interval 133-166 (ISSPTSNDTNQPQQPPAPDTKSNSGNKSNKKEKR) is disordered. The span at 134–144 (SSPTSNDTNQP) shows a compositional bias: polar residues. Residues 171–191 (ASTAMILGLILGLVQAIFLIF) form a helical membrane-spanning segment. Residues 192–215 (SSKLLLGVMGVKPNSPMLSPAHKY) are Extracellular-facing. The helical transmembrane segment at 216–236 (LSIRALGAPALLLSLAMQGIF) threads the bilayer. The Cytoplasmic segment spans residues 237-244 (RGFKDTKT). A helical transmembrane segment spans residues 245–267 (PLFATVVADVINIVLDPIFIFVL). Residues 268–270 (RLG) lie on the Extracellular side of the membrane. A helical membrane pass occupies residues 271-293 (IIGAAIAHVISQYFMTLILFVFL). At 294–316 (AKKVNLIPPNFGDLQFGRFLKNG) the chain is on the cytoplasmic side. Residues 317–337 (LLLLARTIAVTFCQTLAAAMA) traverse the membrane as a helical segment. The Extracellular segment spans residues 338–353 (ARLGTTPMAAFQICLQ). Residues 354 to 374 (VWLTSSLLNDGLAVAGQAILA) traverse the membrane as a helical segment. Residues 375–396 (CSFAEKDYNKVTAVASRVLQMG) lie on the Cytoplasmic side of the membrane. A helical transmembrane segment spans residues 397-417 (FVLGLGLSVFVGLGLYFGAGV). At 418-426 (FSKDPAVIH) the chain is on the extracellular side. A helical transmembrane segment spans residues 427–447 (LMAIGIPFIAATQPINSLAFV). The Cytoplasmic segment spans residues 448–457 (LDGVNFGASD). Residues 458–478 (FAYTAYSMVGVAAISIAAVIY) traverse the membrane as a helical segment. The Extracellular portion of the chain corresponds to 479–484 (MAKTNG). A helical membrane pass occupies residues 485-505 (FIGIWIALTIYMALRAITGIA). The Cytoplasmic portion of the chain corresponds to 506–526 (RMATGTGPWRFLRGRSSSSSS).

This sequence belongs to the multi antimicrobial extrusion (MATE) (TC 2.A.66.1) family. In terms of tissue distribution, expressed in roots in the pericycle and cells internal to the pericycle and surrounding the vascular tissue. Also expressed in seed and flower.

The protein localises to the cell membrane. Its function is as follows. Citrate transporter responsible for loading citrate into xylem tissues, which helps facilitate iron transport to shoots. Mediates the citrate release in the apoplastic spaces during plant development allowing iron nutrition between symplastically disconnected tissues. In Arabidopsis thaliana (Mouse-ear cress), this protein is Protein DETOXIFICATION 43.